The sequence spans 467 residues: H(+)/Cl(-) exchange transporter ClcA (467 aa).

At 1–30 (MTKRERIVKSVLAHVPKDAINQFVSRGSTP) the chain is on the cytoplasmic side. The helical transmembrane segment at 31–67 (FSVLIMAAIVGTLAGFVGTYFELAVHFVSETRTEWLR) threads the bilayer. At 68–74 (SEIGSVL) the chain is on the periplasmic side. The helical transmembrane segment at 75-98 (PLWLAAVLISALLAFIGYFLVHRF) threads the bilayer. The Selectivity filter part_1 signature appears at 104–108 (GSGIP). Position 105 (Ser105) interacts with chloride. Residues 107-114 (IPEIEGAM) constitute an intramembrane region (helical). The Cytoplasmic portion of the chain corresponds to 115 to 121 (DNIRPVR). 2 consecutive transmembrane segments (helical) span residues 122-139 (WWRVLPVKFFGGMGALGS) and 146-164 (EGPTVQMGGAVGRMVTDIF). The Selectivity filter part_2 signature appears at 144-148 (GREGP). Residues 165 to 174 (RVKDDDTRHS) are Cytoplasmic-facing. Intramembrane regions (helical) lie at residues 175 to 187 (LLASGAAGGLAAA) and 191 to 199 (PLAGIMFVV). The Cytoplasmic segment spans residues 200 to 212 (EEMRPQFRYSLIS). Residues 213–230 (IRAVIISAIMANIVFRAI) traverse the membrane as a helical segment. At 231 to 250 (NGQDAVITMPQYQSPALQTL) the chain is on the periplasmic side. The chain crosses the membrane as a helical span at residues 251 to 279 (WLFLLLGALFGVFGVIFNKLITVAQDSFV). Over 280–285 (AIHKND) the chain is Cytoplasmic. A helical membrane pass occupies residues 286 to 307 (RKRYLITGSILGGVFGLLLLYV). At 308–327 (PQLTGGGIALIPDVTTGNYS) the chain is on the periplasmic side. Transmembrane regions (helical) follow at residues 328–347 (ISILVLLFIGRVVTTLLCFG) and 353–374 (GIFAPMLALGTLFGYAFGASAD). The short motif at 353–357 (GIFAP) is the Selectivity filter part_3 element. Ile354 and Phe355 together coordinate chloride. The Periplasmic segment spans residues 375-384 (VLLPTLDIEP). Positions 385–399 (GVFAIAGMGALFAAT) form an intramembrane region, helical. An intramembrane region (note=Loop between two helices) is located at residues 400–402 (VRA). The segment at residues 403–414 (PITGILLVIEMT) is an intramembrane region (helical). An intramembrane region (note=Loop between two helices) is located at residues 415–419 (NNYYL). The chain crosses the membrane as a helical span at residues 420–436 (ILPLIITCLGAVIVAQL). Residues 437-467 (LGGQPIYSQLLHRTLKNDKLRQQDLPENQAS) are Cytoplasmic-facing. Residue Tyr443 participates in chloride binding.

Belongs to the chloride channel (TC 2.A.49) family. ClcA subfamily. Homodimer.

The protein resides in the cell inner membrane. It catalyses the reaction 2 chloride(in) + H(+)(out) = 2 chloride(out) + H(+)(in). Proton-coupled chloride transporter. Functions as antiport system and exchanges two chloride ions for 1 proton. Probably acts as an electrical shunt for an outwardly-directed proton pump that is linked to amino acid decarboxylation, as part of the extreme acid resistance (XAR) response. This is H(+)/Cl(-) exchange transporter ClcA from Vibrio parahaemolyticus serotype O3:K6 (strain RIMD 2210633).